Consider the following 556-residue polypeptide: Arginine--tRNA ligase (556 aa).

The 'HIGH' region signature appears at 132–142; sequence ANPTGDLHLGH.

The protein belongs to the class-I aminoacyl-tRNA synthetase family. Monomer.

The protein localises to the cytoplasm. It catalyses the reaction tRNA(Arg) + L-arginine + ATP = L-arginyl-tRNA(Arg) + AMP + diphosphate. The chain is Arginine--tRNA ligase from Listeria monocytogenes serotype 4b (strain F2365).